Here is a 287-residue protein sequence, read N- to C-terminus: 3-alpha-hydroxysteroid sulfotransferase (287 aa).

44 to 49 is a binding site for 3'-phosphoadenylyl sulfate; that stretch reads KSGTNW. Substrate contacts are provided by tryptophan 72 and tryptophan 77. Histidine 99 serves as the catalytic Proton acceptor. 3'-phosphoadenylyl sulfate-binding positions include arginine 121, serine 129, tyrosine 184, 218-223, and 247-249; these read SSFQFM and RKG.

This sequence belongs to the sulfotransferase 1 family. As to quaternary structure, homodimer. In terms of tissue distribution, adrenal gland and liver.

Its subcellular location is the cytoplasm. It carries out the reaction an alcohol + 3'-phosphoadenylyl sulfate = an alkyl sulfate + adenosine 3',5'-bisphosphate + H(+). Its function is as follows. Sulfotransferase that utilizes 3'-phospho-5'-adenylyl sulfate (PAPS) as sulfonate donor to catalyze the sulfonation of 3-alpha-hydroxyl groups of neutral steroids. This chain is 3-alpha-hydroxysteroid sulfotransferase (STD1), found in Cavia porcellus (Guinea pig).